The following is a 143-amino-acid chain: Crossover junction endodeoxyribonuclease Hjc (143 aa).

Glu11 provides a ligand contact to Mg(2+). Ser31 is an active-site residue. Residues Asp41 and Glu54 each contribute to the Mg(2+) site.

Belongs to the Holliday junction resolvase Hjc family. As to quaternary structure, homodimer. It depends on Mg(2+) as a cofactor.

It carries out the reaction Endonucleolytic cleavage at a junction such as a reciprocal single-stranded crossover between two homologous DNA duplexes (Holliday junction).. Functionally, a structure-specific endonuclease that resolves Holliday junction (HJ) intermediates during genetic recombination. Cleaves 4-way DNA junctions introducing paired nicks in opposing strands, leaving a 5'-terminal phosphate and a 3'-terminal hydroxyl group that are ligated to produce recombinant products. Its function is as follows. Redundant function with Holliday junction resolvase Hje. The sequence is that of Crossover junction endodeoxyribonuclease Hjc from Sulfolobus acidocaldarius (strain ATCC 33909 / DSM 639 / JCM 8929 / NBRC 15157 / NCIMB 11770).